A 212-amino-acid polypeptide reads, in one-letter code: ATP-dependent Clp protease proteolytic subunit (212 aa).

Ser113 serves as the catalytic Nucleophile. The active site involves His138.

It belongs to the peptidase S14 family. In terms of assembly, fourteen ClpP subunits assemble into 2 heptameric rings which stack back to back to give a disk-like structure with a central cavity, resembling the structure of eukaryotic proteasomes.

It is found in the cytoplasm. It catalyses the reaction Hydrolysis of proteins to small peptides in the presence of ATP and magnesium. alpha-casein is the usual test substrate. In the absence of ATP, only oligopeptides shorter than five residues are hydrolyzed (such as succinyl-Leu-Tyr-|-NHMec, and Leu-Tyr-Leu-|-Tyr-Trp, in which cleavage of the -Tyr-|-Leu- and -Tyr-|-Trp bonds also occurs).. Cleaves peptides in various proteins in a process that requires ATP hydrolysis. Has a chymotrypsin-like activity. Plays a major role in the degradation of misfolded proteins. This is ATP-dependent Clp protease proteolytic subunit from Saccharophagus degradans (strain 2-40 / ATCC 43961 / DSM 17024).